The chain runs to 868 residues: DNA mismatch repair protein MutS (868 aa).

G620 to S627 serves as a coordination point for ATP.

It belongs to the DNA mismatch repair MutS family.

Functionally, this protein is involved in the repair of mismatches in DNA. It is possible that it carries out the mismatch recognition step. This protein has a weak ATPase activity. The protein is DNA mismatch repair protein MutS of Desulforamulus reducens (strain ATCC BAA-1160 / DSM 100696 / MI-1) (Desulfotomaculum reducens).